Reading from the N-terminus, the 1202-residue chain is PAN2-PAN3 deadenylation complex catalytic subunit PAN2 (1202 aa).

WD repeat units lie at residues 153–193, 195–231, 244–280, and 328–367; these read DENE…QKYA, ETPG…VEHE, VHGN…AITP, and PVGP…SFNP. The tract at residues 368 to 485 is linker; that stretch reads YSRETEFALP…VGREEEPHLH (118 aa). Positions 486 to 924 constitute a USP domain; the sequence is MVSKKYRKVT…VPAILYYVKR (439 aa). A Phosphoserine modification is found at S791. Positions 975–1147 constitute an Exonuclease domain; that stretch reads VGLDAEFVTL…EDARTALQLY (173 aa). A divalent metal cation is bound by residues D978, E980, D1087, and D1139. S1189 is subject to Phosphoserine.

This sequence belongs to the peptidase C19 family. PAN2 subfamily. As to quaternary structure, forms a heterotrimer with an asymmetric homodimer of the regulatory subunit PAN3 to form the poly(A)-nuclease (PAN) deadenylation complex. Interacts with PAN3 isoform 1/Pan3L and isoform 3/Pan3S. Interacts with ZFP36. A divalent metal cation serves as cofactor.

The protein resides in the cytoplasm. Its subcellular location is the P-body. It is found in the nucleus. The enzyme catalyses Exonucleolytic cleavage of poly(A) to 5'-AMP.. Positively regulated by the regulatory subunit PAN3. Its function is as follows. Catalytic subunit of the poly(A)-nuclease (PAN) deadenylation complex, one of two cytoplasmic mRNA deadenylases involved in general and miRNA-mediated mRNA turnover. PAN specifically shortens poly(A) tails of RNA and the activity is stimulated by poly(A)-binding protein (PABP). PAN deadenylation is followed by rapid degradation of the shortened mRNA tails by the CCR4-NOT complex. Deadenylated mRNAs are then degraded by two alternative mechanisms, namely exosome-mediated 3'-5' exonucleolytic degradation, or deadenylation-dependent mRNA decaping and subsequent 5'-3' exonucleolytic degradation by XRN1. Also acts as an important regulator of the HIF1A-mediated hypoxic response. Required for HIF1A mRNA stability independent of poly(A) tail length regulation. This Homo sapiens (Human) protein is PAN2-PAN3 deadenylation complex catalytic subunit PAN2.